The primary structure comprises 139 residues: I-Kappa-B like protein N1 (139 aa).

3 ANK repeats span residues 16-48 (NGEN…QYLL), 54-87 (EGRK…DVNG), and 92-122 (TGDT…NINA).

Belongs to the polydnaviridae I-Kappa-B-like protein family.

Its function is as follows. Suppresses the host immune response through NF-kappa-B inactivation. Possesses ankyrin repeat domain required for NF-kappa-B binding but lack the regulatory regions required for dissociation from NF-kappa-B and degradation. Therefore, prevents host NF-kappa-B release and subsequent activation. This chain is I-Kappa-B like protein N1 (N2), found in Microplitis demolitor bracovirus (isolate Webb) (MdBV).